A 472-amino-acid chain; its full sequence is Eukaryotic translation initiation factor 2 subunit 3 (472 aa).

Ala2 is subject to N-acetylalanine. Ser16 bears the Phosphoserine mark. Residues 39–248 (QATINIGTIG…IVKKIPVPPR (210 aa)) enclose the tr-type G domain. The G1 stretch occupies residues 48-55 (GHVAHGKS). Residue 51-56 (AHGKST) coordinates GTP. The segment at 76-80 (NITIK) is G2. A G3 region spans residues 134 to 137 (DCPG). GTP-binding positions include 190–193 (NKID) and 225–227 (SAQ). The interval 190–193 (NKID) is G4. Residues 225–227 (SAQ) are G5. The interval 457–469 (GQIRRGVTIKPTV) is interacts with CDC123.

It belongs to the TRAFAC class translation factor GTPase superfamily. Classic translation factor GTPase family. EIF2G subfamily. Eukaryotic translation initiation factor 2 eIF2 is a heterotrimeric complex composed of an alpha (EIF2S1), a beta (EIF2S2) and a gamma (EIF2S3) chain. eIF2 is member of the 43S pre-initiation complex (43S PIC). Interacts (via C-terminus) with CDC123; the interaction is direct.

It is found in the cytoplasm. It localises to the cytosol. The catalysed reaction is GTP + H2O = GDP + phosphate + H(+). Functionally, member of the eIF2 complex that functions in the early steps of protein synthesis by forming a ternary complex with GTP and initiator tRNA. This complex binds to a 40S ribosomal subunit, followed by mRNA binding to form the 43S pre-initiation complex (43S PIC). Junction of the 60S ribosomal subunit to form the 80S initiation complex is preceded by hydrolysis of the GTP bound to eIF2 and release of an eIF2-GDP binary complex. In order for eIF2 to recycle and catalyze another round of initiation, the GDP bound to eIF2 must exchange with GTP by way of a reaction catalyzed by eIF-2B. The sequence is that of Eukaryotic translation initiation factor 2 subunit 3 (EIF2S3) from Bos taurus (Bovine).